The primary structure comprises 673 residues: RAS guanyl-releasing protein 4 (673 aa).

Basic residues-rich tracts occupy residues 1 to 10 and 20 to 32; these read MNRKDSKRKS and GRGRPRQARRHKT. 2 disordered regions span residues 1–34 and 162–188; these read MNRKDSKRKSHQECPVKTGGRGRPRQARRHKTCP and QSLGDFSSRLSPGGPGPPHPMSSPGLG. An N-terminal Ras-GEF domain is found at 49-172; the sequence is GMLNEGGCSE…SLGDFSSRLS (124 aa). One can recognise a Ras-GEF domain in the interval 201 to 432; sequence ETGELAEHLT…YELSYAREPR (232 aa). Positions 466 to 501 constitute an EF-hand domain; that stretch reads HVEQLVESVFKNYDPDGRGTISQEDFERLSGNFPFA. The Phorbol-ester/DAG-type zinc finger occupies 540 to 590; that stretch reads LHTFQEVTFRKPTFCNSCSGFLWGVTKQGYRCRDCGLCCHRHCRDQVKVEC. 2 disordered regions span residues 593 to 618 and 638 to 673; these read RPGAKGDASPPEAPVPPTPVPQASCG and RHAWTQTESPHPSWEPETVPLPAKASPPTESSKLNS. Positions 603-612 are enriched in pro residues; that stretch reads PEAPVPPTPV.

This sequence belongs to the RASGRP family.

It localises to the cytoplasm. Its subcellular location is the cell membrane. Its function is as follows. Functions as a cation- and diacylglycerol (DAG)-regulated nucleotide exchange factor activating Ras through the exchange of bound GDP for GTP. In neutrophils, participates in a phospholipase C-activating N-formyl peptide-activated GPCR (G protein-coupled receptor) signaling pathway by promoting Ras-mediated activation of PIK3CG/PI3Kgamma to promote neutrophil functional responses. In CD117(+) dendritic cells and mast cells, participates in an lipopolysaccharide (LPS)-activated signaling pathway that stimulates the production of interferon-gamma and other pro-inflammatory cytokines by natural killer (NK) cells. May function in mast cell differentiation. Does not appear to be required for the development of B-cells, DC-cells, T-cells, or NK-cells. The protein is RAS guanyl-releasing protein 4 (RASGRP4) of Bos taurus (Bovine).